Here is a 415-residue protein sequence, read N- to C-terminus: FXa-directed anticoagulant (415 aa).

An N-terminal signal peptide occupies residues 1–17 (MYLKIVILVTFPLVCFT). Residues Asn117, Asn166, Asn216, and Asn320 are each glycosylated (N-linked (GlcNAc...) asparagine).

Belongs to the serpin family. In terms of assembly, (Microbial infection) Interacts with Zika virus envelope protein E and Zika virus-like particles; the interaction does not affect Zika virus replication in human endothelial cells and keratinocytes. In terms of processing, the N-terminus is blocked. Female salivary gland (at protein level). Not detected in female carcass without head and salivary glands. Not detected in male tissues.

The protein resides in the secreted. Anticoagulant serpin-type protein inhibiting host coagulation factor Xa (F10). Does not inhibit host thrombin (F2) and trypsin. In terms of biological role, (Microbial infection) Does not affect Zika virus replication in human endothelial cells and keratinocytes. In Aedes aegypti (Yellowfever mosquito), this protein is FXa-directed anticoagulant.